The following is a 143-amino-acid chain: MLKEFREFAMKGNVVDLAVGVIIGAAFGAIVTSMVGDLIMPVIGAVTGGLDFSNYFTPLSKAVTANSLAEAKKQGAVLAWGSFLTITLNFLIVAGVLFGVIRAMNRLKRNDEAVAASPPKPTREQELLTEIRDILKSGIRPQV.

The next 2 helical transmembrane spans lie at 19 to 39 (VGVI…GDLI) and 81 to 101 (GSFL…FGVI).

It belongs to the MscL family. As to quaternary structure, homopentamer.

The protein localises to the cell inner membrane. Functionally, channel that opens in response to stretch forces in the membrane lipid bilayer. May participate in the regulation of osmotic pressure changes within the cell. This Rhodopseudomonas palustris (strain BisB5) protein is Large-conductance mechanosensitive channel.